A 586-amino-acid chain; its full sequence is Paxillin (586 aa).

Met1 carries the N-acetylmethionine modification. The LD motif 1 signature appears at 3–15 (DLDALLADLESTT). The disordered stretch occupies residues 13 to 138 (STTSHISKRP…PSPTVMSSSL (126 aa)). Residue Tyr31 is modified to Phosphotyrosine; by PTK6. Over residues 45 to 54 (VPPPVPPPPS) the composition is skewed to pro residues. 2 positions are modified to phosphoserine: Ser83 and Ser85. Positions 86–98 (PIYSSSTKNSSAS) are enriched in low complexity. The residue at position 88 (Tyr88) is a Phosphotyrosine. Residue Ser106 is modified to Phosphoserine. At Tyr118 the chain carries Phosphotyrosine; by PTK6. Ser119, Ser126, and Ser130 each carry phosphoserine. Residues 121-137 (PNKQKSAEPSPTVMSSS) are compositionally biased toward polar residues. Thr132 bears the Phosphothreonine mark. 3 positions are modified to phosphoserine: Ser137, Ser140, and Ser143. The short motif at 144-156 (ELDRLLLELNAVQ) is the LD motif 2 element. At Tyr210 the chain carries Phosphotyrosine. The tract at residues 220 to 241 (GGKAGPLMKEKPKRNGGRGLED) is disordered. An LD motif 3 motif is present at residues 245–257 (SVESLLDELENSV). Ser259 bears the Phosphoserine mark. Residues 266–290 (VNQGEMSSPQRVTSSQQQTRISASS) form a disordered region. The residue at position 273 (Ser273) is a Phosphoserine; by CDK5. Phosphoserine occurs at positions 279, 287, 290, 301, 317, 327, and 335. Residues 291-310 (ATRELDELMASLSDFKFMAQ) are required for binding to PARVA and ILK. Residues 294–305 (ELDELMASLSDF) carry the LD motif 4 motif. The interval 309–329 (AQGKTGSSSPPGGLSKPGSQL) is disordered. A compositionally biased stretch (low complexity) spans 310-329 (QGKTGSSSPPGGLSKPGSQL). The LD motif 5 signature appears at 328–340 (QLDSMLGSLQSDL). 3 consecutive LIM zinc-binding domains span residues 353–403 (CGAC…CEKD), 412–462 (CYYC…CRKD), and 471–521 (CGGC…CEVH). Phosphoserine is present on Ser528. The region spanning 530–580 (CSGCQKPITGRCITAMAKKFHPEHFVCAFCLKQLNKGTFKEQNDKPYCQSC) is the LIM zinc-binding 4 domain.

It belongs to the paxillin family. As to quaternary structure, interacts in vitro with VCL/vinculin as well as to the SH3 domain of SRC and, when tyrosine phosphorylated, to the SH2 domain of CRK. Interacts with GIT1. Interacts with NUDT16L1/SDOS. Interacts with PTK2/FAK1. Interacts with PTK2B/PYK2. Interacts with ASAP2. Interacts with unphosphorylated ITGA4. Interacts with RNF5. Interacts with PDCD10. Interacts with NEK3, the interaction is prolactin-dependent. Interacts with PTK6. Interacts with TGFB1I1. Interacts with SORBS1. Interacts with PARVB. Interacts (via LD motif 4) with PARVA/PARVIN. Interacts (via LD motif 4) with ILK. Interacts (via cytoplasmic domain) with CEACAM1; the interaction is phosphotyrosyl-dependent. Interacts with LIMA1; this complex stabilizes actin dynamics. Interacts with CD36 (via C-terminus). Interacts with TRIM15. Interacts with PAK4; PAK4 acts as a scaffold to suppport PAXI phosphorylation at Ser-301. Post-translationally, phosphorylated by MAPK1/ERK2. Phosphorylated on tyrosine residues during integrin-mediated cell adhesion, embryonic development, fibroblast transformation and following stimulation of cells by mitogens. Phosphorylation at Ser-273 by CDK5 reduces its interaction with PTK2/FAK1 in matrix-cell focal adhesions (MCFA) during oligodendrocytes (OLs) differentiation. Phosphorylation at Tyr-31 and Tyr-118 by PTK6 promote the activation of RAC1 via CRK/CrKII, thereby promoting migration and invasion. Phosphorylation at Ser-279 by SLK is required for PXN redistribution and cell motility. Phosphorylation at Ser-301 promotes focal adhesion disassembly during cell migration.

It localises to the cytoplasm. The protein localises to the cytoskeleton. Its subcellular location is the cell junction. The protein resides in the focal adhesion. It is found in the cell cortex. In terms of biological role, cytoskeletal protein involved in actin-membrane attachment at sites of cell adhesion to the extracellular matrix (focal adhesion). Recruits other proteins such as TRIM15 to focal adhesion. The chain is Paxillin from Rattus norvegicus (Rat).